Consider the following 106-residue polypeptide: Pyrimidine/purine nucleoside phosphorylase (106 aa).

It belongs to the nucleoside phosphorylase PpnP family.

It catalyses the reaction a purine D-ribonucleoside + phosphate = a purine nucleobase + alpha-D-ribose 1-phosphate. The catalysed reaction is adenosine + phosphate = alpha-D-ribose 1-phosphate + adenine. The enzyme catalyses cytidine + phosphate = cytosine + alpha-D-ribose 1-phosphate. It carries out the reaction guanosine + phosphate = alpha-D-ribose 1-phosphate + guanine. It catalyses the reaction inosine + phosphate = alpha-D-ribose 1-phosphate + hypoxanthine. The catalysed reaction is thymidine + phosphate = 2-deoxy-alpha-D-ribose 1-phosphate + thymine. The enzyme catalyses uridine + phosphate = alpha-D-ribose 1-phosphate + uracil. It carries out the reaction xanthosine + phosphate = alpha-D-ribose 1-phosphate + xanthine. Its function is as follows. Catalyzes the phosphorolysis of diverse nucleosides, yielding D-ribose 1-phosphate and the respective free bases. Can use uridine, adenosine, guanosine, cytidine, thymidine, inosine and xanthosine as substrates. Also catalyzes the reverse reactions. The polypeptide is Pyrimidine/purine nucleoside phosphorylase (Burkholderia cenocepacia (strain ATCC BAA-245 / DSM 16553 / LMG 16656 / NCTC 13227 / J2315 / CF5610) (Burkholderia cepacia (strain J2315))).